The primary structure comprises 479 residues: Protein nucleotidyltransferase YdiU (479 aa).

ATP contacts are provided by Gly83, Gly85, Arg86, Lys106, Asp118, Gly119, Arg169, and Arg176. Residue Asp245 is the Proton acceptor of the active site. Residues Asn246 and Asp255 each contribute to the Mg(2+) site. Asp255 is a binding site for ATP.

The protein belongs to the SELO family. Mg(2+) serves as cofactor. Mn(2+) is required as a cofactor.

It carries out the reaction L-seryl-[protein] + ATP = 3-O-(5'-adenylyl)-L-seryl-[protein] + diphosphate. The catalysed reaction is L-threonyl-[protein] + ATP = 3-O-(5'-adenylyl)-L-threonyl-[protein] + diphosphate. The enzyme catalyses L-tyrosyl-[protein] + ATP = O-(5'-adenylyl)-L-tyrosyl-[protein] + diphosphate. It catalyses the reaction L-histidyl-[protein] + UTP = N(tele)-(5'-uridylyl)-L-histidyl-[protein] + diphosphate. It carries out the reaction L-seryl-[protein] + UTP = O-(5'-uridylyl)-L-seryl-[protein] + diphosphate. The catalysed reaction is L-tyrosyl-[protein] + UTP = O-(5'-uridylyl)-L-tyrosyl-[protein] + diphosphate. Functionally, nucleotidyltransferase involved in the post-translational modification of proteins. It can catalyze the addition of adenosine monophosphate (AMP) or uridine monophosphate (UMP) to a protein, resulting in modifications known as AMPylation and UMPylation. The sequence is that of Protein nucleotidyltransferase YdiU from Erwinia tasmaniensis (strain DSM 17950 / CFBP 7177 / CIP 109463 / NCPPB 4357 / Et1/99).